Here is a 1203-residue protein sequence, read N- to C-terminus: Plasma membrane calcium-transporting ATPase 4 (1203 aa).

Over 1-92 (MTNPSGHNLP…NMIPPKKPKT (92 aa)) the chain is Cytoplasmic. Ser13 is subject to Phosphoserine. The helical transmembrane segment at 93–113 (FLELVWEALQDVTLIILEIAA) threads the bilayer. The Extracellular segment spans residues 114 to 150 (IISLVLSFYRPPGGENEICGHIVSNPEEDEEGETGWI). Residues 151–171 (EGAAILASVIIVVFVTAFNDW) traverse the membrane as a helical segment. Topologically, residues 172–356 (SKEKQFRGLQ…KEKSVLQGKL (185 aa)) are cytoplasmic. Positions 294–319 (DDEKKKKGKKQGVSENRNKAKTQDGV) are disordered. 2 positions are modified to phosphoserine: Ser328 and Ser334. The disordered stretch occupies residues 330–349 (EGLDSEEKEKKASKGPKKEK). Basic and acidic residues predominate over residues 334–349 (SEEKEKKASKGPKKEK). The chain crosses the membrane as a helical span at residues 357–376 (TRLAVQIGKAGLIMSILTVL). Residues 377–409 (ILILYFVVDNFVIQRRAWLPECTPVYIQYFVKF) are Extracellular-facing. A helical membrane pass occupies residues 410 to 427 (FIIGVTVLVVAVPEGLPL). Residues 428–840 (AVTISLAYSV…MWGRNVYDSI (413 aa)) are Cytoplasmic-facing. The active-site 4-aspartylphosphate intermediate is the Asp465. Positions 785 and 789 each coordinate Mg(2+). Residues 841–860 (SKFLQFQLTVNVVAVIVAFS) traverse the membrane as a helical segment. Residues 861 to 870 (GACITQDSPL) are Extracellular-facing. The helical transmembrane segment at 871–891 (KAVQMLWVNLIMDTFASLALA) threads the bilayer. Residues 892 to 911 (TEPPTDSLLRRRPYGRNKPL) are Cytoplasmic-facing. A helical transmembrane segment spans residues 912–934 (ISRTMMKNILGHAVYQLGIVFLL). The Extracellular segment spans residues 935–952 (VFAGDKLFDIDSGRKAPL). Residues 953–974 (NSPPSQHYTIVFNTFVLMQLFN) form a helical membrane-spanning segment. Residues 975-993 (EINSRKIHGEKNVFAGVYR) are Cytoplasmic-facing. Residues 994–1015 (NIIFCSVVLGTFFCQILIVEVG) traverse the membrane as a helical segment. Over 1016–1025 (GKPFSCTNLT) the chain is Extracellular. The chain crosses the membrane as a helical span at residues 1026-1047 (MEQWMWCLFIGIGELLWGQVIS). Residues 1048-1203 (AIPTKSLKFL…SPLQSQETPV (156 aa)) lie on the Cytoplasmic side of the membrane. Residues Ser1064 and Ser1070 each carry the phosphoserine modification. Residues 1086–1103 (LRRGQILWVRGLNRIQTQ) are calmodulin-binding subdomain A. A Phosphothreonine; by PKC modification is found at Thr1102. Position 1103 is a phosphoserine (Gln1103). The interval 1104-1113 (IRVVKVFHSF) is calmodulin-binding subdomain B. A phosphoserine mark is found at Arg1114, Asp1115, Ile1126, and Ser1144.

It belongs to the cation transport ATPase (P-type) (TC 3.A.3) family. Type IIB subfamily. Interacts with PDZD11. Interacts with SLC35G1 and STIM1. Interacts with calmodulin. In terms of tissue distribution, ubiquitously expressed. Not detected in liver. The highest levels are found in uterus and stomach. Isoform XA is found in uterus, brain, stomach, small intestine, colon and pancreas. Isoform XB is found in uterus, skeletal muscle, lung, kidney, spleen, stomach, small intestine and pancreas. Isoform ZA is found in testis and isoform ZB is found in testis and heart.

The protein localises to the cell membrane. It localises to the cell projection. Its subcellular location is the cilium. The protein resides in the flagellum membrane. The catalysed reaction is Ca(2+)(in) + ATP + H2O = Ca(2+)(out) + ADP + phosphate + H(+). Its activity is regulated as follows. Activated by calcium/calmodulin. Its function is as follows. Calcium/calmodulin-regulated and magnesium-dependent enzyme that catalyzes the hydrolysis of ATP coupled with the transport of calcium out of the cell. By regulating sperm cell calcium homeostasis, may play a role in sperm motility. The protein is Plasma membrane calcium-transporting ATPase 4 of Rattus norvegicus (Rat).